A 689-amino-acid polypeptide reads, in one-letter code: MADLEAVLADVSYLMAMEKSKATPAARASKKILLPEPSIRSVMQKYLEDRGEVTFEKIFSQKLGYLLFRDFCLNHLEEAKPLVEFYEEIKKYEKLETEEERVVRSREIFDSYIMKELLACSHPFSKNATEHVQGHLVKKQVPPDLFQPYIEEICQNLRGDVFQKFIESDKFTRFCQWKNVELNIHLTMNDFSVHRIIGRGGFGEVYGCRKADTGKMYAMKCLDKKRIKMKQGETLALNERIMLSLVSTGDCPFIVCMSYAFHTPDKLSFILDLMNGGDLHYHLSQHGVFSEADMRFYAAEIILGLEHMHNRFVVYRDLKPANILLDEHGHVRISDLGLACDFSKKRPHASVGTHGYMAPEVLQKGVAYDSSADWFSLGCMLFKLLRGHSPFRQHKTKDKHEIDRMTLTMAVELPDSFSPELRSLLEGLLQRDVNRRLGCLGRGAQEVKESPFFRSLDWQMVFLQKYPPPLIPPRGEVNAADAFDIGSFDEEDTKGIKLLDSDQELYRNFPLTISERWQQEVAETVFDTINAETDRLEARKKAKNKQLGHEEDYALGKDCIVHGYMSKMGNPFLTQWQRRYFYLFPNRLEWRGEGEAPQSLLTMEEIQSVEETQIKERKCLLLKIRGGKQFVLQCDSDPELVQWKKELRDAYREAQQLVQRVPKMKNKPRSPVVELSKVPLIQRGSANGL.

Residues 1–190 form an N-terminal region; that stretch reads MADLEAVLAD…ELNIHLTMND (190 aa). An RGS domain is found at 54–175; that stretch reads TFEKIFSQKL…IESDKFTRFC (122 aa). The 263-residue stretch at 191–453 folds into the Protein kinase domain; that stretch reads FSVHRIIGRG…AQEVKESPFF (263 aa). ATP contacts are provided by residues 197–205 and Lys220; that span reads IGRGGFGEV. Residue Asp317 is the Proton acceptor of the active site. An AGC-kinase C-terminal domain is found at 454–521; it reads RSLDWQMVFL…TISERWQQEV (68 aa). Positions 558–652 constitute a PH domain; the sequence is DCIVHGYMSK…WKKELRDAYR (95 aa). Ser670 carries the phosphoserine modification.

This sequence belongs to the protein kinase superfamily. AGC Ser/Thr protein kinase family. GPRK subfamily. In terms of assembly, interacts with the heterodimer formed by GNB1 and GNG2. Interacts with GIT1. Interacts with, and phosphorylates chemokine-stimulated CCR5. Interacts with ARRB1. Interacts with LPAR1 and LPAR2. Interacts with RALA in response to LPAR1 activation. ADRBK1 and RALA mutually inhibit each other's binding to LPAR1. Interacts with ADRB2.

The protein localises to the cytoplasm. Its subcellular location is the cell membrane. It is found in the postsynapse. It localises to the presynapse. It catalyses the reaction [beta-adrenergic receptor] + ATP = [beta-adrenergic receptor]-phosphate + ADP + H(+). With respect to regulation, in contrast to other AGC family kinases, the catalytic activity is solely regulated by the binding of substrates and ligands, not by phosphorylation of the kinase domain. Functionally, specifically phosphorylates the agonist-occupied form of the beta-adrenergic and closely related receptors, probably inducing a desensitization of them. Key regulator of LPAR1 signaling. Competes with RALA for binding to LPAR1 thus affecting the signaling properties of the receptor. Desensitizes LPAR1 and LPAR2 in a phosphorylation-independent manner. Positively regulates ciliary smoothened (SMO)-dependent Hedgehog (Hh) signaling pathway by facilitating the trafficking of SMO into the cilium and the stimulation of SMO activity. Inhibits relaxation of airway smooth muscle in response to blue light. The sequence is that of Beta-adrenergic receptor kinase 1 from Mus musculus (Mouse).